Reading from the N-terminus, the 221-residue chain is Large ribosomal subunit protein uL16A (221 aa).

The protein belongs to the universal ribosomal protein uL16 family. In terms of assembly, component of the large ribosomal subunit (LSU). Mature yeast ribosomes consist of a small (40S) and a large (60S) subunit. The 40S small subunit contains 1 molecule of ribosomal RNA (18S rRNA) and at least 33 different proteins. The large 60S subunit contains 3 rRNA molecules (25S, 5.8S and 5S rRNA) and at least 46 different proteins.

It localises to the cytoplasm. Functionally, component of the ribosome, a large ribonucleoprotein complex responsible for the synthesis of proteins in the cell. The small ribosomal subunit (SSU) binds messenger RNAs (mRNAs) and translates the encoded message by selecting cognate aminoacyl-transfer RNA (tRNA) molecules. The large subunit (LSU) contains the ribosomal catalytic site termed the peptidyl transferase center (PTC), which catalyzes the formation of peptide bonds, thereby polymerizing the amino acids delivered by tRNAs into a polypeptide chain. The nascent polypeptides leave the ribosome through a tunnel in the LSU and interact with protein factors that function in enzymatic processing, targeting, and the membrane insertion of nascent chains at the exit of the ribosomal tunnel. The sequence is that of Large ribosomal subunit protein uL16A (rpl1001) from Schizosaccharomyces pombe (strain 972 / ATCC 24843) (Fission yeast).